The sequence spans 143 residues: Mediator of RNA polymerase II transcription subunit 22 (143 aa).

Belongs to the Mediator complex subunit 22 family. In terms of assembly, component of the Mediator complex, which includes at least CDK8, MED4, MED6, MED11, MED14, MED17, MED18, MED20, MED21, MED22, MED27, MED28, MED30 and MED31.

The protein localises to the nucleus. In terms of biological role, component of the Mediator complex, a coactivator involved in the regulated transcription of nearly all RNA polymerase II-dependent genes. Mediator functions as a bridge to convey information from gene-specific regulatory proteins to the basal RNA polymerase II transcription machinery. Mediator is recruited to promoters by direct interactions with regulatory proteins and serves as a scaffold for the assembly of a functional preinitiation complex with RNA polymerase II and the general transcription factors. The protein is Mediator of RNA polymerase II transcription subunit 22 (MED22) of Drosophila melanogaster (Fruit fly).